A 368-amino-acid chain; its full sequence is ATP-dependent (S)-NAD(P)H-hydrate dehydratase (368 aa).

Positions 3–359 (SPSKKLLANV…DEVHGSFLDL (357 aa)) constitute a YjeF C-terminal domain. Residues G120 and 173 to 179 (NVVEFAR) each bind (6S)-NADPHX. Residues 217 to 221 (KGPHD) and 236 to 245 (GGLKRSGGQG) each bind ATP. D246 lines the (6S)-NADPHX pocket.

It belongs to the NnrD/CARKD family. It depends on Mg(2+) as a cofactor.

Its subcellular location is the cytoplasm. It catalyses the reaction (6S)-NADHX + ATP = ADP + phosphate + NADH + H(+). It carries out the reaction (6S)-NADPHX + ATP = ADP + phosphate + NADPH + H(+). Catalyzes the dehydration of the S-form of NAD(P)HX at the expense of ATP, which is converted to ADP. Together with NAD(P)HX epimerase, which catalyzes the epimerization of the S- and R-forms, the enzyme allows the repair of both epimers of NAD(P)HX, a damaged form of NAD(P)H that is a result of enzymatic or heat-dependent hydration. This chain is ATP-dependent (S)-NAD(P)H-hydrate dehydratase, found in Ajellomyces capsulatus (strain G186AR / H82 / ATCC MYA-2454 / RMSCC 2432) (Darling's disease fungus).